Reading from the N-terminus, the 605-residue chain is Dihydrogeodin oxidase (605 aa).

The first 18 residues, 1-18, serve as a signal peptide directing secretion; sequence MPSLKDWVVAGLVPMTIA. Residues Asn27, Asn107, and Asn112 are each glycosylated (N-linked (GlcNAc...) asparagine). 3 consecutive Plastocyanin-like domains span residues 65-183, 189-347, and 424-567; these read TVTQ…GPSS, DLGP…YDES, and YVDW…KIKP. Cu cation-binding residues include His117, His119, His161, and His163. 2 N-linked (GlcNAc...) asparagine glycosylation sites follow: Asn278 and Asn467. Residues His484, His487, His489, His543, Cys544, His545, and His549 each contribute to the Cu cation site.

This sequence belongs to the multicopper oxidase family. It depends on Cu cation as a cofactor.

The catalysed reaction is 2 dihydrogeodin + O2 + 2 H(+) = 2 (+)-geodin + 2 H2O. Its pathway is secondary metabolite biosynthesis. Its function is as follows. Dihydrogeodin oxidase; part of the gene cluster that mediates the biosynthesis of geodin, an intermediate in the biosynthesis of other natural products. The pathway begins with the synthesis of atrochrysone thioester by the polyketide synthase (PKS) gedC. The atrochrysone carboxyl ACP thioesterase gedB then breaks the thioester bond and releases the atrochrysone carboxylic acid from gedC. The atrochrysone carboxylic acid is then converted to atrochrysone which is further transformed into emodinanthrone. The next step is performed by the emodinanthrone oxygenase gedH that catalyzes the oxidation of emodinanthrone to emodin. Emodin O-methyltransferase encoded probably by gedA then catalyzes methylation of the 8-hydroxy group of emodin to form questin. Ring cleavage of questin by questin oxidase gedK leads to desmethylsulochrin via several intermediates including questin epoxide. Another methylation step probably catalyzed by methyltransferase gedG leads to the formation of sulochrin which is further converted to dihydrogeodin by the sulochrin halogenase gedL. Finally, the dihydrogeodin oxidase gedJ catalyzes the stereospecific phenol oxidative coupling reaction converting dihydrogeodin to geodin. The polypeptide is Dihydrogeodin oxidase (Aspergillus terreus (strain NIH 2624 / FGSC A1156)).